The primary structure comprises 144 residues: 3-dehydroquinate dehydratase (144 aa).

Tyrosine 22 functions as the Proton acceptor in the catalytic mechanism. Positions 73, 79, and 86 each coordinate substrate. Histidine 99 serves as the catalytic Proton donor. Substrate-binding positions include 100–101 (IS) and arginine 110.

This sequence belongs to the type-II 3-dehydroquinase family. Homododecamer.

It carries out the reaction 3-dehydroquinate = 3-dehydroshikimate + H2O. It participates in metabolic intermediate biosynthesis; chorismate biosynthesis; chorismate from D-erythrose 4-phosphate and phosphoenolpyruvate: step 3/7. In terms of biological role, catalyzes a trans-dehydration via an enolate intermediate. In Clostridium acetobutylicum (strain ATCC 824 / DSM 792 / JCM 1419 / IAM 19013 / LMG 5710 / NBRC 13948 / NRRL B-527 / VKM B-1787 / 2291 / W), this protein is 3-dehydroquinate dehydratase.